The primary structure comprises 372 residues: Glutamate 5-kinase (372 aa).

Lys-14 contributes to the ATP binding site. Substrate is bound by residues Ser-54, Asp-141, and Asn-153. Residues 173-174 and 215-221 each bind ATP; these read TD and TGGMITK. A PUA domain is found at 280–358; sequence AGRLLLDDGA…REIEAALGYI (79 aa).

The protein belongs to the glutamate 5-kinase family.

It localises to the cytoplasm. It carries out the reaction L-glutamate + ATP = L-glutamyl 5-phosphate + ADP. It participates in amino-acid biosynthesis; L-proline biosynthesis; L-glutamate 5-semialdehyde from L-glutamate: step 1/2. In terms of biological role, catalyzes the transfer of a phosphate group to glutamate to form L-glutamate 5-phosphate. In Chromobacterium violaceum (strain ATCC 12472 / DSM 30191 / JCM 1249 / CCUG 213 / NBRC 12614 / NCIMB 9131 / NCTC 9757 / MK), this protein is Glutamate 5-kinase.